Reading from the N-terminus, the 529-residue chain is MEPEFDHFQSQMDSDNTHQSTMFNVQDNNAILMSGMENVLQSPRQLQAAAQAQQQAAAQAQQQQVQAQQVQAQQAQQQQQQQQNQQQQQQQQNQQNQQQQQNQQQQSQQMTQQQLQQLMPPPPTSDTSNFNDNISYFVYGSQFTVPRRYSIVKCIGHGAYGVVCSAKDNLTGEKVAIKKISKAFDNLKDTKRTLREIHLLRHFKHENLISIKDILKPNSKEQFEDVYIVSELMDTDLHQIITSPQPLSDDHCQYFVYQMLRGLKHIHSANVLHRDLKPSNLLINEDCLLKICDLGLARVEDATHQGFMTEYVATRWYRAPEVILSWNKYTKAIDIWSVGCIFAELLGRKPLFQGKDYIHQITLIIETIGSPSEEDICNIANEQARQFIRNMGNQPKVNFANMFPKANPDAIDLLERMLYFDPSKRLTVEEALAHPYFQSLHDPSDEPICLHKFSLNFEAWDLNRDLLKELIYNEMLAYHPEDPQAPYYTDLNNPNFNLSRIQSSSELFNLLQQQKQQIHQQVNQQSIKN.

Disordered regions lie at residues 1–20 (MEPEFDHFQSQMDSDNTHQS) and 100–131 (QQNQQQQSQQMTQQQLQQLMPPPPTSDTSNFN). The segment covering 8–20 (FQSQMDSDNTHQS) has biased composition (polar residues). Low complexity predominate over residues 100–117 (QQNQQQQSQQMTQQQLQQ). The Protein kinase domain maps to 149–439 (YSIVKCIGHG…EALAHPYFQS (291 aa)). ATP-binding positions include 155–163 (IGHGAYGVV) and lysine 178. The active-site Proton acceptor is the aspartate 275. Phosphothreonine is present on threonine 309. A TXY motif is present at residues 309 to 311 (TEY). Tyrosine 311 is modified (phosphotyrosine).

It belongs to the protein kinase superfamily. CMGC Ser/Thr protein kinase family. MAP kinase subfamily. Requires Mg(2+) as cofactor. Dually phosphorylated on Thr-309 and Tyr-311, which activates the enzyme.

It catalyses the reaction L-seryl-[protein] + ATP = O-phospho-L-seryl-[protein] + ADP + H(+). The enzyme catalyses L-threonyl-[protein] + ATP = O-phospho-L-threonyl-[protein] + ADP + H(+). Its activity is regulated as follows. Activated by tyrosine and threonine phosphorylation. Functionally, kinase involved in a signal transduction pathway. This is Extracellular signal-regulated kinase 1 (erkA) from Dictyostelium discoideum (Social amoeba).